The chain runs to 430 residues: 3-phosphoshikimate 1-carboxyvinyltransferase (430 aa).

3 residues coordinate 3-phosphoshikimate: K21, S22, and R26. K21 provides a ligand contact to phosphoenolpyruvate. Phosphoenolpyruvate-binding residues include G95 and R123. Positions 167, 169, 315, and 342 each coordinate 3-phosphoshikimate. Q169 is a binding site for phosphoenolpyruvate. D315 serves as the catalytic Proton acceptor. Residues R346 and R390 each coordinate phosphoenolpyruvate.

It belongs to the EPSP synthase family. Monomer.

It is found in the cytoplasm. It carries out the reaction 3-phosphoshikimate + phosphoenolpyruvate = 5-O-(1-carboxyvinyl)-3-phosphoshikimate + phosphate. Its pathway is metabolic intermediate biosynthesis; chorismate biosynthesis; chorismate from D-erythrose 4-phosphate and phosphoenolpyruvate: step 6/7. Functionally, catalyzes the transfer of the enolpyruvyl moiety of phosphoenolpyruvate (PEP) to the 5-hydroxyl of shikimate-3-phosphate (S3P) to produce enolpyruvyl shikimate-3-phosphate and inorganic phosphate. The protein is 3-phosphoshikimate 1-carboxyvinyltransferase of Endomicrobium trichonymphae.